The sequence spans 245 residues: Octanoyltransferase (245 aa).

Positions 54-242 (KTAHEQVWLL…AFEKIFGPTI (189 aa)) constitute a BPL/LPL catalytic domain. Substrate-binding positions include 93-100 (RGGEFTYH), 173-175 (AIG), and 186-188 (GVS). Cys-204 functions as the Acyl-thioester intermediate in the catalytic mechanism.

Belongs to the LipB family.

The protein resides in the cytoplasm. The catalysed reaction is octanoyl-[ACP] + L-lysyl-[protein] = N(6)-octanoyl-L-lysyl-[protein] + holo-[ACP] + H(+). It functions in the pathway protein modification; protein lipoylation via endogenous pathway; protein N(6)-(lipoyl)lysine from octanoyl-[acyl-carrier-protein]: step 1/2. Functionally, catalyzes the transfer of endogenously produced octanoic acid from octanoyl-acyl-carrier-protein onto the lipoyl domains of lipoate-dependent enzymes. Lipoyl-ACP can also act as a substrate although octanoyl-ACP is likely to be the physiological substrate. The protein is Octanoyltransferase of Bartonella tribocorum (strain CIP 105476 / IBS 506).